Here is a 586-residue protein sequence, read N- to C-terminus: Arginine--tRNA ligase (586 aa).

The 'HIGH' region signature appears at 133 to 143; that stretch reads ANPTGPLNIVS.

It belongs to the class-I aminoacyl-tRNA synthetase family. In terms of assembly, monomer.

It is found in the cytoplasm. It catalyses the reaction tRNA(Arg) + L-arginine + ATP = L-arginyl-tRNA(Arg) + AMP + diphosphate. This Leptospira interrogans serogroup Icterohaemorrhagiae serovar Lai (strain 56601) protein is Arginine--tRNA ligase.